A 231-amino-acid polypeptide reads, in one-letter code: Protein crossbronx homolog (231 aa).

A UBC core domain is found at 14–168; the sequence is LQEYKILTEY…VEECVRLSQA (155 aa).

This sequence belongs to the ubiquitin-conjugating enzyme family. FTS subfamily.

The protein is Protein crossbronx homolog of Culex quinquefasciatus (Southern house mosquito).